Reading from the N-terminus, the 453-residue chain is ATP-dependent protease ATPase subunit HslU (453 aa).

ATP-binding positions include Ile18, 60 to 65, Asp266, Glu331, and Arg403; that span reads GVGKTE.

The protein belongs to the ClpX chaperone family. HslU subfamily. In terms of assembly, a double ring-shaped homohexamer of HslV is capped on each side by a ring-shaped HslU homohexamer. The assembly of the HslU/HslV complex is dependent on binding of ATP.

It is found in the cytoplasm. In terms of biological role, ATPase subunit of a proteasome-like degradation complex; this subunit has chaperone activity. The binding of ATP and its subsequent hydrolysis by HslU are essential for unfolding of protein substrates subsequently hydrolyzed by HslV. HslU recognizes the N-terminal part of its protein substrates and unfolds these before they are guided to HslV for hydrolysis. The chain is ATP-dependent protease ATPase subunit HslU from Desulforapulum autotrophicum (strain ATCC 43914 / DSM 3382 / VKM B-1955 / HRM2) (Desulfobacterium autotrophicum).